The following is a 382-amino-acid chain: V-type proton ATPase subunit C 1 (382 aa).

T2 bears the N-acetylthreonine mark.

It belongs to the V-ATPase C subunit family. V-ATPase is a heteromultimeric enzyme made up of two complexes: the ATP-hydrolytic V1 complex and the proton translocation V0 complex. The V1 complex consists of three catalytic AB heterodimers that form a heterohexamer, three peripheral stalks each consisting of EG heterodimers, one central rotor including subunits D and F, and the regulatory subunits C and H. The proton translocation complex V0 consists of the proton transport subunit a, a ring of proteolipid subunits c9c'', rotary subunit d, subunits e and f, and the accessory subunits ATP6AP1/Ac45 and ATP6AP2/PRR. Expressed in brain (at protein level).

It is found in the cytoplasmic vesicle. Its subcellular location is the secretory vesicle. It localises to the synaptic vesicle membrane. The protein resides in the clathrin-coated vesicle membrane. In terms of biological role, subunit of the V1 complex of vacuolar(H+)-ATPase (V-ATPase), a multisubunit enzyme composed of a peripheral complex (V1) that hydrolyzes ATP and a membrane integral complex (V0) that translocates protons. V-ATPase is responsible for acidifying and maintaining the pH of intracellular compartments and in some cell types, is targeted to the plasma membrane, where it is responsible for acidifying the extracellular environment. Subunit C is necessary for the assembly of the catalytic sector of the enzyme and is likely to have a specific function in its catalytic activity. This chain is V-type proton ATPase subunit C 1 (ATP6V1C1), found in Bos taurus (Bovine).